A 207-amino-acid polypeptide reads, in one-letter code: Large ribosomal subunit protein bL25 (207 aa).

It belongs to the bacterial ribosomal protein bL25 family. CTC subfamily. Part of the 50S ribosomal subunit; part of the 5S rRNA/L5/L18/L25 subcomplex. Contacts the 5S rRNA. Binds to the 5S rRNA independently of L5 and L18.

In terms of biological role, this is one of the proteins that binds to the 5S RNA in the ribosome where it forms part of the central protuberance. The sequence is that of Large ribosomal subunit protein bL25 from Bordetella petrii (strain ATCC BAA-461 / DSM 12804 / CCUG 43448).